The following is a 427-amino-acid chain: Trigger factor (427 aa).

In terms of domain architecture, PPIase FKBP-type spans 163–248 (GDTVVIDFVG…VHEVKAKEVP (86 aa)).

This sequence belongs to the FKBP-type PPIase family. Tig subfamily.

The protein resides in the cytoplasm. It catalyses the reaction [protein]-peptidylproline (omega=180) = [protein]-peptidylproline (omega=0). Involved in protein export. Acts as a chaperone by maintaining the newly synthesized protein in an open conformation. Functions as a peptidyl-prolyl cis-trans isomerase. This is Trigger factor from Streptococcus equi subsp. equi (strain 4047).